Here is a 508-residue protein sequence, read N- to C-terminus: Inosine-5'-monophosphate dehydrogenase (508 aa).

CBS domains follow at residues 111–170 and 174–230; these read FITD…EITL and MTTN…PDAS. NAD(+) contacts are provided by residues Asp-267 and 317-319; that span reads GMG. The K(+) site is built by Gly-319 and Gly-321. Ser-322 serves as a coordination point for IMP. Cys-324 is a K(+) binding site. Cys-324 serves as the catalytic Thioimidate intermediate. Residues 357–359, 380–381, and 404–408 contribute to the IMP site; these read DGG, GF, and YRGMA. The Proton acceptor role is filled by Arg-420. Residue Gln-432 participates in IMP binding. A K(+)-binding site is contributed by Gly-492.

Belongs to the IMPDH/GMPR family. As to quaternary structure, homotetramer. K(+) is required as a cofactor.

The enzyme catalyses IMP + NAD(+) + H2O = XMP + NADH + H(+). Its pathway is purine metabolism; XMP biosynthesis via de novo pathway; XMP from IMP: step 1/1. With respect to regulation, mycophenolic acid (MPA) is a non-competitive inhibitor that prevents formation of the closed enzyme conformation by binding to the same site as the amobile flap. In contrast, mizoribine monophosphate (MZP) is a competitive inhibitor that induces the closed conformation. MPA is a potent inhibitor of mammalian IMPDHs but a poor inhibitor of the bacterial enzymes. MZP is a more potent inhibitor of bacterial IMPDH. Catalyzes the conversion of inosine 5'-phosphate (IMP) to xanthosine 5'-phosphate (XMP), the first committed and rate-limiting step in the de novo synthesis of guanine nucleotides, and therefore plays an important role in the regulation of cell growth. The sequence is that of Inosine-5'-monophosphate dehydrogenase from Leptospira interrogans serogroup Icterohaemorrhagiae serovar Lai (strain 56601).